The sequence spans 316 residues: MST50-interacting protein 11 (316 aa).

7 WD repeats span residues 13–53, 61–100, 103–142, 146–187, 190–229, 231–269, and 281–316; these read GHNG…TSYG, GHSH…TTRR, GHTN…KYTI, GHSE…LQTD, GHTG…HLYS, NAND…KVDE, and SREP…MSRA.

This sequence belongs to the WD repeat G protein beta family. Ribosomal protein RACK1 subfamily. In terms of assembly, interacts with MST50 and MCK1.

In terms of biological role, involved in regulating the cell wall integrity and MPS1 activation via its interaction with the MAPKKK MCK1. The chain is MST50-interacting protein 11 from Pyricularia oryzae (strain 70-15 / ATCC MYA-4617 / FGSC 8958) (Rice blast fungus).